Consider the following 180-residue polypeptide: MKGTSEVKPMETHRKLLKPLVEKRRRERINNSLEKLRIFLSQTLKSEKLKNPKVEKAEILECTVQFLQSRKLLPLDREAVDKEYQSGFQHCLETTLHFMNSKPDMNGVTKELLSHQMSSCKPPSDAWSPTCAPLTKHVPSLSYQDSTPHLVSNSISISPTKTLVDSHFTYQTFKTWRPWV.

The bHLH domain maps to 13–70 (HRKLLKPLVEKRRRERINNSLEKLRIFLSQTLKSEKLKNPKVEKAEILECTVQFLQSR). One can recognise an Orange domain in the interval 84–116 (YQSGFQHCLETTLHFMNSKPDMNGVTKELLSHQ). Positions 176 to 179 (WRPW) match the WRPW motif motif.

Transcription repression requires formation of a complex with a corepressor protein of the Groucho/TLE family. Expressed in the presumptive midbrain-hindbrain boundary (MHB) as early as the early gastrula stage (stage 10.5). Expression in the MHB continues through to tailbud stage. Also transiently expressed in the eye anlage at late neurula stage.

Its subcellular location is the nucleus. Functionally, transcriptional repressor. Represses transcription from both N box- and E box-containing promoters. Demarcates the prospective midbrain-hindbrain boundary (MHB) region in the neuroectoderm in early gastrulae embryos by repressing transcription of a number of target genes. This is Transcription factor HES-7.1-B (hes7.1-b) from Xenopus laevis (African clawed frog).